We begin with the raw amino-acid sequence, 565 residues long: Periplasmic trehalase (565 aa).

The first 30 residues, 1-30 (MKSPAPSRPQKMALIPACIFLCFAALSVQA), serve as a signal peptide directing secretion. Residues R152, 159 to 160 (WD), N196, 205 to 207 (RSQ), 277 to 279 (RPE), and G310 each bind substrate. Catalysis depends on proton donor/acceptor residues D312 and E496. E511 contacts substrate. A disordered region spans residues 538 to 565 (PCDNVPATRPTVKSATTQPSTKEAQPTP). Residues 548 to 565 (TVKSATTQPSTKEAQPTP) show a composition bias toward polar residues.

It belongs to the glycosyl hydrolase 37 family. Monomer.

It localises to the periplasm. The enzyme catalyses alpha,alpha-trehalose + H2O = alpha-D-glucose + beta-D-glucose. Provides the cells with the ability to utilize trehalose at high osmolarity by splitting it into glucose molecules that can subsequently be taken up by the phosphotransferase-mediated uptake system. The polypeptide is Periplasmic trehalase (Escherichia coli O139:H28 (strain E24377A / ETEC)).